Consider the following 154-residue polypeptide: Large ribosomal subunit protein uL30 (154 aa).

Residues arginine 122 to histidine 141 are disordered.

Belongs to the universal ribosomal protein uL30 family. In terms of assembly, part of the 50S ribosomal subunit.

The sequence is that of Large ribosomal subunit protein uL30 from Halobacterium salinarum (strain ATCC 29341 / DSM 671 / R1).